The following is a 481-amino-acid chain: MPQSNHYSHQSRSHNDRRRQQPDEKVQATVNIGQRFPLTIRRLGINGEGIGYYKHVITFVKGALPEEVVVAEVTAVHPRYLEAKIRSIRKPSPDRVDPRDAYAGEVGGFELEHLDYPAQLAFKQDLIRQALEKYRPAGYRHYDVRPTIGMTNPYEYRNKAQFQVRLIDGHVAAGLYKENSHDLVDLPTCSVQMPATMTVMRQVVAWLEELQVPIYDEEHNSGIVKTIVVREAAATGEIQLVFITNTPKLPKKHQLLMKIAEKLPMVVSVMQNINAGKTSLIWGDQTTLLAGKPTITEELDGLVFDLSARAFFQLNPQQTKKLYRLAREALNLAPNETLVDAYSGVGTIGLSLADVAKEVRGMDTIPAAVADANANAQRNQITNAHYEVGEAEVLLPQWLASGFAPDAMVVDPPRTGLDNVLIDAILQSAPEKLVYISCNPSTLAQDLQALTRGYQVDYIQSIDMFPQTARCEAVVRFTKRH.

Residues 1–28 (MPQSNHYSHQSRSHNDRRRQQPDEKVQA) form a disordered region. The TRAM domain maps to 29–87 (TVNIGQRFPLTIRRLGINGEGIGYYKHVITFVKGALPEEVVVAEVTAVHPRYLEAKIRS). Q313, Y342, D363, and D411 together coordinate S-adenosyl-L-methionine. C438 acts as the Nucleophile in catalysis.

The protein belongs to the class I-like SAM-binding methyltransferase superfamily. RNA M5U methyltransferase family.

This is an uncharacterized protein from Lactiplantibacillus plantarum (strain ATCC BAA-793 / NCIMB 8826 / WCFS1) (Lactobacillus plantarum).